Here is a 118-residue protein sequence, read N- to C-terminus: Basic phospholipase A2 3 (118 aa).

Disulfide bonds link cysteine 11–cysteine 71, cysteine 27–cysteine 117, cysteine 29–cysteine 45, cysteine 44–cysteine 98, cysteine 51–cysteine 91, cysteine 60–cysteine 84, and cysteine 78–cysteine 89. 3 residues coordinate Ca(2+): tyrosine 28, glycine 30, and glycine 32. The active site involves histidine 48. Aspartate 49 lines the Ca(2+) pocket. The active site involves aspartate 92.

This sequence belongs to the phospholipase A2 family. Group I subfamily. D49 sub-subfamily. In terms of assembly, monomer. Ca(2+) is required as a cofactor. As to expression, expressed by the venom gland.

The protein localises to the secreted. It catalyses the reaction a 1,2-diacyl-sn-glycero-3-phosphocholine + H2O = a 1-acyl-sn-glycero-3-phosphocholine + a fatty acid + H(+). PLA2 catalyzes the calcium-dependent hydrolysis of the 2-acyl groups in 3-sn-phosphoglycerides. This chain is Basic phospholipase A2 3, found in Laticauda semifasciata (Black-banded sea krait).